The primary structure comprises 2528 residues: Highly reducing polyketide synthase pspA (2528 aa).

The segment at 1–53 (MLAQDVEFVDLPPPEATAGAATTDNETSSFNSNPVPTPSEASSIGPPHQLPVP) is disordered. Over residues 24–42 (DNETSSFNSNPVPTPSEAS) the composition is skewed to polar residues. A Ketosynthase family 3 (KS3) domain is found at 63 to 483 (VEPMAICGMA…GSNAHVLLGS (421 aa)). Active-site for beta-ketoacyl synthase activity residues include cysteine 235, histidine 371, and histidine 406. The tract at residues 590-909 (TFTGQGAQWA…HKDLLKAVGE (320 aa)) is malonyl-CoA:ACP transacylase (MAT) domain. Positions 961–1089 (HDILGSRVLE…GQVCAGSDRE (129 aa)) are N-terminal hotdog fold. Residues 961–1230 (HDILGSRVLE…VSNGHVTIDI (270 aa)) are dehydratase (DH) domain. A PKS/mFAS DH domain is found at 961–1244 (HDILGSRVLE…MSAIGDAADA (284 aa)). Residue histidine 993 is the Proton acceptor; for dehydratase activity of the active site. Residues 1099–1244 (PRQLSRRGWY…MSAIGDAADA (146 aa)) are C-terminal hotdog fold. Aspartate 1160 (proton donor; for dehydratase activity) is an active-site residue. Residues 1409-1587 (VFLELLAHRK…GFSGINLVSH (179 aa)) are methyltransferase (CMet) domain. An enoyl reductase (ER) (ER) domain region spans residues 1803-2119 (GLVDTLCWKS…RGQHIGKIVI (317 aa)). The interval 2143–2322 (RAYLFVGGLG…ASTVNIGVIQ (180 aa)) is ketoreductase (KR) domain. The 79-residue stretch at 2447–2525 (ETAELLAGEI…DLGVLAQKKL (79 aa)) folds into the Carrier domain. The residue at position 2485 (serine 2485) is an O-(pantetheine 4'-phosphoryl)serine.

The catalysed reaction is 9 malonyl-CoA + acetyl-CoA + S-adenosyl-L-methionine + 13 NADPH + 20 H(+) = soppiline A + S-adenosyl-L-homocysteine + 9 CO2 + 13 NADP(+) + 10 CoA + 7 H2O. It participates in secondary metabolite biosynthesis. Its function is as follows. Highly reducing polyketide synthase; part of the gene cluster that mediates the biosynthesis of the alkylresorcinols called soppilines. The biosynthesis starts with the HR-PKS pspA-catalyzed carbon chain assembly through nine chain elongation cycles, using acetyl CoA and malonyl CoA as a starter and extender units, respectively, to produce the polyketide soppiline A. In the first round, the KR, DH, and CMeT domains work to produce 2-methyl-2-butenyl thioester. In rounds 2 to 5, the KR, DH, and ER domains fully catalyze the reduction of the elongated beta-ketothioester, resulting in the insertion of eight methylene units. The unusual Z,E,Z-triene motif is likely constructed during rounds 6 to 8. Typically, the DH domain introduces a double bond at an alpha,beta-position of an elongated polyketide chain, with the dehydration of a beta-hydroxy group. The last extension cycle would be carried out with L-oriented beta-ketoreduction by the KR domain to produce beta-hydroxy carboxylic acid soppiline A. The type III PKS pspB intercepts the elongated polyketide chain at round 8 from the HR-PKS pspA, followed by a tri-keto extension and decarboxylative aldol cyclization to produce 1,3,5-trisubstituted alkylresorcinol soppiline B. Subsequently, the cytochrome P450 monooxygenase pspC catalyzes three-step oxidations at the C-4 methyl group to carboxylic acid to yield soppiline C. In Penicillium soppii, this protein is Highly reducing polyketide synthase pspA.